The primary structure comprises 615 residues: Afadin- and alpha-actinin-binding protein (615 aa).

Coiled coils occupy residues 126-227 (KLGS…IAMD) and 266-293 (RQKQ…SLLS). Phosphoserine is present on residues serine 290, serine 293, serine 313, and serine 319. Positions 293–316 (SPQKKKPRERAEDGTGTVAISDIE) are disordered. Positions 375-461 (ISRQDHEQET…RSFTEAAIRL (87 aa)) form a coiled coil. Residues serine 537, serine 541, and serine 543 each carry the phosphoserine modification. Residues 567–615 (PEESKPSEVARESTDQKWSVQSRPSSREGCYSGCSSAFRSAHGDRDDLP) are disordered. Residues 568-581 (EESKPSEVARESTD) are compositionally biased toward basic and acidic residues.

Belongs to the ADIP family. Interacts with SSX2 and SSX3. Does not interact with SSX1 and SSX4. Interacts with afadin and alpha-actinin. Interacts with VAV2. Interacts with PCM1. Interacts with WRAP73. In terms of tissue distribution, widely expressed.

It localises to the cell junction. The protein resides in the adherens junction. Its subcellular location is the nucleus. It is found in the cytoplasm. The protein localises to the cytoskeleton. It localises to the microtubule organizing center. The protein resides in the centrosome. Its subcellular location is the centriolar satellite. It is found in the cilium basal body. Its function is as follows. Belongs to an adhesion system, which plays a role in the organization of homotypic, interneuronal and heterotypic cell-cell adherens junctions (AJs). May connect the nectin-afadin and E-cadherin-catenin system through alpha-actinin and may be involved in organization of the actin cytoskeleton at AJs through afadin and alpha-actinin. Acts as a centrosome maturation factor, probably by maintaining the integrity of the pericentriolar material and proper microtubule nucleation at mitotic spindle poles. The function seems to implicate at least in part WRAP73; the SSX2IP:WRAP73 complex is proposed to act as regulator of spindle anchoring at the mitotic centrosome. Involved in cell movement: localizes at the leading edge of moving cells in response to PDGF and is required for the formation of the leading edge and the promotion of cell movement, possibly via activation of Rac signaling. Involved in ciliogenesis. It is required for targeted recruitment of the BBSome, CEP290, RAB8, and SSTR3 to the cilia. The chain is Afadin- and alpha-actinin-binding protein (Ssx2ip) from Mus musculus (Mouse).